Here is a 136-residue protein sequence, read N- to C-terminus: Single-stranded DNA-binding protein 1 (136 aa).

In terms of domain architecture, SSB spans 4-109; it reads LNKMQLIGNL…IMAKEMQMLG (106 aa). The tract at residues 109–136 is disordered; that stretch reads GKKQDNNKVGNARHGDALPADEDDYYDF. The segment covering 127-136 has biased composition (acidic residues); the sequence is PADEDDYYDF.

As to quaternary structure, homotetramer.

The sequence is that of Single-stranded DNA-binding protein 1 (ssb1) from Xylella fastidiosa (strain 9a5c).